Consider the following 210-residue polypeptide: 23.6 kDa heat shock protein, mitochondrial (210 aa).

The N-terminal 31 residues, 1-31 (MASALALKRLLSSSIAPRSRSVLRPAVSSRL), are a transit peptide targeting the mitochondrion. The sHSP domain maps to 100–210 (MGASGARRGW…RNDVRQIEIN (111 aa)). Positions 145-165 (GEGKNEEDGGEEGESGNRRFT) are disordered.

Belongs to the small heat shock protein (HSP20) family. In terms of assembly, may form oligomeric structures.

The protein localises to the mitochondrion. In Arabidopsis thaliana (Mouse-ear cress), this protein is 23.6 kDa heat shock protein, mitochondrial (HSP23.6).